A 172-amino-acid chain; its full sequence is Type IV secretion system putative outer membrane lipoprotein BAB2_0057 (172 aa).

The N-terminal stretch at methionine 1–alanine 15 is a signal peptide. A lipid anchor (N-palmitoyl cysteine) is attached at cysteine 16. Cysteine 16 carries the S-diacylglycerol cysteine lipid modification. Positions tryptophan 58–lysine 172 constitute an OmpA-like domain.

It is found in the cell outer membrane. Functionally, the virB operon is essential for intracellular survival and is not involved in the invasion process. Constitutes a major determinant of virulence in mice. This protein is essential for pathogenesis in mice but is not required for intracellular survival. This is Type IV secretion system putative outer membrane lipoprotein BAB2_0057 from Brucella abortus (strain 2308).